A 282-amino-acid polypeptide reads, in one-letter code: Shikimate dehydrogenase (NADP(+)) (282 aa).

Shikimate contacts are provided by residues 15-17 (SKS) and T62. The active-site Proton acceptor is the K66. Shikimate is bound by residues N87 and D103. NADP(+) is bound by residues 127–131 (GAGGA), 151–156 (NRTHTK), and M220. Residue Y222 participates in shikimate binding. Residue G244 participates in NADP(+) binding.

Belongs to the shikimate dehydrogenase family. As to quaternary structure, homodimer.

It catalyses the reaction shikimate + NADP(+) = 3-dehydroshikimate + NADPH + H(+). It participates in metabolic intermediate biosynthesis; chorismate biosynthesis; chorismate from D-erythrose 4-phosphate and phosphoenolpyruvate: step 4/7. Involved in the biosynthesis of the chorismate, which leads to the biosynthesis of aromatic amino acids. Catalyzes the reversible NADPH linked reduction of 3-dehydroshikimate (DHSA) to yield shikimate (SA). The sequence is that of Shikimate dehydrogenase (NADP(+)) from Shewanella baltica (strain OS195).